Here is a 397-residue protein sequence, read N- to C-terminus: Succinate--CoA ligase [ADP-forming] subunit beta (397 aa).

One can recognise an ATP-grasp domain in the interval 9–254 (KALLKGYGAP…ETEEDAKEIE (246 aa)). ATP contacts are provided by residues lysine 46, 53–55 (GRG), glutamate 109, alanine 112, and glutamate 117. Asparagine 209 and aspartate 223 together coordinate Mg(2+). Residues asparagine 274 and 331–333 (GIM) each bind substrate.

It belongs to the succinate/malate CoA ligase beta subunit family. Heterotetramer of two alpha and two beta subunits. Mg(2+) serves as cofactor.

The enzyme catalyses succinate + ATP + CoA = succinyl-CoA + ADP + phosphate. The catalysed reaction is GTP + succinate + CoA = succinyl-CoA + GDP + phosphate. The protein operates within carbohydrate metabolism; tricarboxylic acid cycle; succinate from succinyl-CoA (ligase route): step 1/1. Its function is as follows. Succinyl-CoA synthetase functions in the citric acid cycle (TCA), coupling the hydrolysis of succinyl-CoA to the synthesis of either ATP or GTP and thus represents the only step of substrate-level phosphorylation in the TCA. The beta subunit provides nucleotide specificity of the enzyme and binds the substrate succinate, while the binding sites for coenzyme A and phosphate are found in the alpha subunit. The chain is Succinate--CoA ligase [ADP-forming] subunit beta from Rhizobium etli (strain CIAT 652).